The primary structure comprises 185 residues: Ribosome-recycling factor (185 aa).

This sequence belongs to the RRF family.

It is found in the cytoplasm. In terms of biological role, responsible for the release of ribosomes from messenger RNA at the termination of protein biosynthesis. May increase the efficiency of translation by recycling ribosomes from one round of translation to another. The chain is Ribosome-recycling factor from Haemophilus influenzae (strain 86-028NP).